Here is an 848-residue protein sequence, read N- to C-terminus: Translation initiation factor IF-2 (848 aa).

Residues 1-265 form a disordered region; that stretch reads MSDTDGKKPL…GNQRAEKQVR (265 aa). The segment covering 89 to 162 has biased composition (basic and acidic residues); it reads KAREVEEAAQ…AEIAKPKTEA (74 aa). Residues 163 to 179 are compositionally biased toward low complexity; it reads RPATPADRAAAEAAAVR. Basic and acidic residues predominate over residues 191–219; sequence RKTDRDRDTRGGGGDDRDSRNKGRDDSRR. The 169-residue stretch at 346–514 folds into the tr-type G domain; it reads PRAPIITIMG…AIALQAEILE (169 aa). A G1 region spans residues 355-362; sequence GHVDHGKT. 355 to 362 serves as a coordination point for GTP; it reads GHVDHGKT. Positions 380–384 are G2; the sequence is GITQH. The segment at 402-405 is G3; that stretch reads DTPG. GTP-binding positions include 402 to 406 and 456 to 459; these read DTPGH and NKID. The G4 stretch occupies residues 456-459; that stretch reads NKID. Residues 492-494 form a G5 region; it reads SAK.

The protein belongs to the TRAFAC class translation factor GTPase superfamily. Classic translation factor GTPase family. IF-2 subfamily.

The protein resides in the cytoplasm. One of the essential components for the initiation of protein synthesis. Protects formylmethionyl-tRNA from spontaneous hydrolysis and promotes its binding to the 30S ribosomal subunits. Also involved in the hydrolysis of GTP during the formation of the 70S ribosomal complex. This Paracoccus denitrificans (strain Pd 1222) protein is Translation initiation factor IF-2.